The following is an 833-amino-acid chain: Serine-rich coiled-coil domain-containing protein 2 (833 aa).

Residues 178–208 (NRSSGNVQKPRVNSCASRSSSGESLAQSPDN) form a disordered region. The segment covering 191–208 (SCASRSSSGESLAQSPDN) has biased composition (polar residues). The residue at position 222 (Ser-222) is a Phosphoserine. Disordered stretches follow at residues 321–345 (LLKS…PADM), 424–452 (NRTR…FDSP), 478–508 (KHTS…SSDG), and 602–631 (DHYH…ESPL). Residue Ser-451 is modified to Phosphoserine. Residues 496–506 (SSFELSPSDSS) are compositionally biased toward low complexity. The segment covering 606-615 (LSHPGHYHHH) has biased composition (basic residues). Residues 711-747 (DQIYKNEDLLNEITQLKEEIKKKDEKIQLLEQQLATR) are a coiled coil. Positions 789-833 (FQGMPRTVPPHRRQTSSTTAFQQPSQIYRPRPGKTNKATTYRGPQ) are disordered. Residues 803-814 (TSSTTAFQQPSQ) show a composition bias toward polar residues.

The protein belongs to the CCSER family. In terms of tissue distribution, expressed in brain (at protein level).

It is found in the cytoplasm. The protein resides in the cytoskeleton. Functionally, microtubule-binding protein which might play a role in microtubule bundling. The chain is Serine-rich coiled-coil domain-containing protein 2 (Ccser2) from Mus musculus (Mouse).